The chain runs to 472 residues: Membrane-bound acylglycerophosphatidylinositol O-acyltransferase MBOAT7 (472 aa).

Residues 1–5 lie on the Cytoplasmic side of the membrane; sequence MSPEE. A helical membrane pass occupies residues 6–22; it reads WTYLVVLLISIPIGFLF. Residues 23 to 33 lie on the Lumenal side of the membrane; that stretch reads KKAGPGLKRWG. A helical transmembrane segment spans residues 34 to 57; sequence AAAVGLGLTLFTCGPHTLHSLVTI. Residues 58–73 are Cytoplasmic-facing; that stretch reads LGTWALIQAQPCSCHA. The chain crosses the membrane as a helical span at residues 74–93; the sequence is LALAWTFSYLLFFRALSLLG. The Lumenal segment spans residues 94 to 194; the sequence is LPTPTPFTNA…VPSLRPLLRR (101 aa). A helical transmembrane segment spans residues 195–212; the sequence is AWPAPLFGLLFLLSSHLF. At 213-231 the chain is on the cytoplasmic side; that stretch reads PLEAVREDAFYARPLPARL. A helical membrane pass occupies residues 232 to 261; the sequence is FYMIPVFFAFRMRFYVAWIAAECGCIAAGF. Topologically, residues 262 to 426 are lumenal; that stretch reads GAYPVAAKAR…LSLRDTLRYW (165 aa). N-linked (GlcNAc...) asparagine glycosylation is present at asparagine 321. Residues 427–447 form a helical membrane-spanning segment; it reads ASVYFCVHVLALAALGLGLAL. The Cytoplasmic portion of the chain corresponds to 448-472; it reads GRGGPGRRKSGAPAPSPASGKLREE. Residues 450–472 form a disordered region; that stretch reads GGPGRRKSGAPAPSPASGKLREE.

Belongs to the membrane-bound acyltransferase family. In terms of assembly, interacts with SPTSSA; the interaction facilitates MBOAT7 location to mitochondria-associated membranes (MAMs).

The protein resides in the endoplasmic reticulum membrane. The catalysed reaction is a 1-acyl-sn-glycero-3-phospho-(1D-myo-inositol) + an acyl-CoA = a 1,2-diacyl-sn-glycero-3-phospho-(1D-myo-inositol) + CoA. The enzyme catalyses a 1-acyl-sn-glycero-3-phospho-(1D-myo-inositol) + (5Z,8Z,11Z,14Z)-eicosatetraenoyl-CoA = a 1-acyl-2-(5Z,8Z,11Z,14Z-eicosatetraenoyl)-sn-glycero-3-phospho-(1D-myo-inositol) + CoA. It carries out the reaction (5Z,8Z,11Z,14Z)-eicosatetraenoyl-CoA + 1-hexadecanoyl-sn-glycero-3-phosphocholine = 1-hexadecanoyl-2-(5Z,8Z,11Z,14Z-eicosatetraenoyl)-sn-glycero-3-phosphocholine + CoA. It catalyses the reaction 1-octadecanoyl-sn-glycero-3-phospho-(1D-myo-inositol) + (5Z,8Z,11Z,14Z)-eicosatetraenoyl-CoA = 1-octadecanoyl-2-(5Z,8Z,11Z,14Z-eicosatetraenoyl)-sn-glycero-3-phospho-(1D-myo-inositol) + CoA. Its pathway is lipid metabolism; phospholipid metabolism. Acyltransferase which catalyzes the transfer of an acyl group from an acyl-CoA to a lysophosphatidylinositol (1-acylglycerophosphatidylinositol or LPI) leading to the production of a phosphatidylinositol (1,2-diacyl-sn-glycero-3-phosphoinositol or PI) and participates in the reacylation step of the phospholipid remodeling pathway also known as the Lands cycle. Prefers arachidonoyl-CoA as the acyl donor, thus contributing to the regulation of free levels arachidonic acid in cell. In liver, participates in the regulation of triglyceride metabolism through the phosphatidylinositol acyl-chain remodeling regulation. The chain is Membrane-bound acylglycerophosphatidylinositol O-acyltransferase MBOAT7 (MBOAT7) from Bos taurus (Bovine).